Here is an 896-residue protein sequence, read N- to C-terminus: Sodium/hydrogen exchanger 5 (896 aa).

Over 1–45 (MLRAALSLLALPLAGAAEEPTQKPESPGEPPPGLELFRWQWHEVE) the chain is Cytoplasmic. Residues 46-66 (APYLVALWILVASLAKIVFHL) form a helical membrane-spanning segment. At 67 to 73 (SRKVTSL) the chain is on the extracellular side. Residues 74-94 (VPESCLLILLGLVLGGIVLAV) traverse the membrane as a helical segment. Topologically, residues 95–103 (AKKAEYQLE) are cytoplasmic. The helical transmembrane segment at 104-124 (PGTFFLFLLPPIVLDSGYFMP) threads the bilayer. Residues 125 to 134 (SRLFFDNLGA) are Extracellular-facing. Residues 135 to 155 (ILTYAVVGTLWNAFTTGAALW) form a helical membrane-spanning segment. Topologically, residues 156–173 (GLQQAGLVAPRVQAGLLD) are cytoplasmic. The helical transmembrane segment at 174–194 (FLLFGSLISAVDPVAVLAVFE) threads the bilayer. Topologically, residues 195–200 (EVHVNE) are extracellular. N-linked (GlcNAc...) asparagine glycosylation is present at asparagine 199. The chain crosses the membrane as a helical span at residues 201–221 (TLFIIVFGESLLNDAVTVVLY). Residues 222-246 (KVCNSFVEMGSANVQATDYLKGVAS) lie on the Cytoplasmic side of the membrane. A helical transmembrane segment spans residues 247–267 (LFVVSLGGAAVGLVFAFLLAL). The Extracellular portion of the chain corresponds to 268-276 (TTRFTKRVR). The chain crosses the membrane as a helical span at residues 277 to 297 (IIEPLLVFLLAYAAYLTAEMA). Over 298-331 (SLSAILAVTMCGLGCKKYVEANISHKSRTTVKYT) the chain is Cytoplasmic. Residues 332 to 352 (MKTLASCAETVIFMLLGISAV) form a helical membrane-spanning segment. Residues 353 to 360 (DSSKWAWD) are Extracellular-facing. Residues 361–381 (SGLVLGTLIFILFFRALGVVL) form a helical membrane-spanning segment. Residues 382 to 398 (QTWVLNQFRLVPLDKID) lie on the Cytoplasmic side of the membrane. Residues 399–419 (QVVMSYGGLRGAVAFALVILL) form a helical membrane-spanning segment. Over 420-428 (DRTKVPAKD) the chain is Extracellular. A helical membrane pass occupies residues 429–449 (YFVATTIVVVFFTVIVQGLTI). The Cytoplasmic portion of the chain corresponds to 450–896 (KPLVKWLKVK…CIQFNRGSRL (447 aa)). Positions 576–721 (GSGACLDLQV…SETEKEDDEG (146 aa)) are required for interaction with ARRB2. Disordered regions lie at residues 658–686 (TKSKPRPRKTGRRKKDGVANAEATNGKHR), 701–720 (ESEEEEEESDSSETEKEDDE), and 818–864 (HPRG…QQQE). The segment covering 660 to 672 (SKPRPRKTGRRKK) has biased composition (basic residues). Positions 854 to 864 (ESSADLPQQQE) are enriched in polar residues.

This sequence belongs to the monovalent cation:proton antiporter 1 (CPA1) transporter (TC 2.A.36) family. Interacts with CHP1 and CHP2. Interacts with ARRB2; facilitates the endocytosis of SLC9A5 from the plasma membrane. Interacts with RACK1; this interaction positively regulates SLC9A5 activity and promotes SLC9A5 localization to focal adhesions. Interacts with SCAMP2; this interaction regulates SLC9A5 cell-surface targeting and SLC9A5 activity. Post-translationally, phosphorylated by PRKAA2; promotes its accumulation at the cell surface. Phosphorylated by CSNK2A1 in a manner favoring its beta-arrestin binding and endocytosis. Mainly expressed in brain. Expressed in neurons of the central and peripheral nervous system. Expressed also in testis, spleen, and skeletal muscle.

The protein resides in the cell membrane. It localises to the recycling endosome membrane. Its subcellular location is the cell projection. The protein localises to the dendritic spine membrane. It is found in the synaptic cell membrane. The protein resides in the cell junction. It localises to the focal adhesion. The enzyme catalyses Na(+)(in) + H(+)(out) = Na(+)(out) + H(+)(in). With respect to regulation, ATP-depletion almost completely abolishes SLC9A5 activity. Inhibited by amiloride compounds. Functionally, plasma membrane Na(+)/H(+) antiporter. Mediates the electroneutral exchange of intracellular H(+) ions for extracellular Na(+) in 1:1 stoichiometry, thus regulating intracellular pH homeostasis, in particular in neural tissues. Acts as a negative regulator of dendritic spine growth. Plays a role in postsynaptic remodeling and signaling. Can also contribute to organellar pH regulation, with consequences for receptor tyrosine kinase trafficking. The sequence is that of Sodium/hydrogen exchanger 5 from Homo sapiens (Human).